Reading from the N-terminus, the 239-residue chain is Purine nucleoside phosphorylase DeoD-type (239 aa).

Residue histidine 5 participates in a purine D-ribonucleoside binding. Phosphate is bound by residues glycine 21, arginine 25, arginine 44, and 88–91 (RVGS). Residues 180 to 182 (EME) and 204 to 205 (SD) each bind a purine D-ribonucleoside. The active-site Proton donor is the aspartate 205.

It belongs to the PNP/UDP phosphorylase family. As to quaternary structure, homohexamer; trimer of homodimers.

The enzyme catalyses a purine D-ribonucleoside + phosphate = a purine nucleobase + alpha-D-ribose 1-phosphate. The catalysed reaction is a purine 2'-deoxy-D-ribonucleoside + phosphate = a purine nucleobase + 2-deoxy-alpha-D-ribose 1-phosphate. In terms of biological role, catalyzes the reversible phosphorolytic breakdown of the N-glycosidic bond in the beta-(deoxy)ribonucleoside molecules, with the formation of the corresponding free purine bases and pentose-1-phosphate. The protein is Purine nucleoside phosphorylase DeoD-type of Yersinia pestis bv. Antiqua (strain Antiqua).